The sequence spans 371 residues: Aminomethyltransferase (371 aa).

Belongs to the GcvT family. As to quaternary structure, the glycine cleavage system is composed of four proteins: P, T, L and H.

It catalyses the reaction N(6)-[(R)-S(8)-aminomethyldihydrolipoyl]-L-lysyl-[protein] + (6S)-5,6,7,8-tetrahydrofolate = N(6)-[(R)-dihydrolipoyl]-L-lysyl-[protein] + (6R)-5,10-methylene-5,6,7,8-tetrahydrofolate + NH4(+). Its function is as follows. The glycine cleavage system catalyzes the degradation of glycine. In Pectobacterium carotovorum subsp. carotovorum (strain PC1), this protein is Aminomethyltransferase.